We begin with the raw amino-acid sequence, 187 residues long: MGKQPLAKKAEMVDEVRSLLQASQMVLVIDYRGLTVSEMNQLRAELRKADAVCMVVKNTLMRRAVADQKAWAGILPFLSGPTAFIMIRGDIPAALKAYQDFAKQTKKTEFRGAAAEGLSLTLDQAKAIAELPPKEVLMAQVAGSLKSVATRLAVGLNAVPTQVARGIQEIPASLARAIRAIADKEAA.

Belongs to the universal ribosomal protein uL10 family. In terms of assembly, part of the ribosomal stalk of the 50S ribosomal subunit. The N-terminus interacts with L11 and the large rRNA to form the base of the stalk. The C-terminus forms an elongated spine to which L12 dimers bind in a sequential fashion forming a multimeric L10(L12)X complex.

In terms of biological role, forms part of the ribosomal stalk, playing a central role in the interaction of the ribosome with GTP-bound translation factors. The chain is Large ribosomal subunit protein uL10 from Synechococcus sp. (strain JA-3-3Ab) (Cyanobacteria bacterium Yellowstone A-Prime).